Consider the following 453-residue polypeptide: uncharacterized protein (453 aa).

The protein to yeast RIT1.

This is an uncharacterized protein from Schizosaccharomyces pombe (strain 972 / ATCC 24843) (Fission yeast).